A 140-amino-acid polypeptide reads, in one-letter code: Small ribosomal subunit protein bS6 (140 aa).

The interval 96 to 140 (VTGQSEMLKAEENRSERRERRDRPEHEGADSADSDDSDNSDNADE) is disordered. Residues 103–124 (LKAEENRSERRERRDRPEHEGA) are compositionally biased toward basic and acidic residues. The segment covering 125 to 140 (DSADSDDSDNSDNADE) has biased composition (acidic residues).

The protein belongs to the bacterial ribosomal protein bS6 family.

Its function is as follows. Binds together with bS18 to 16S ribosomal RNA. This chain is Small ribosomal subunit protein bS6, found in Pseudomonas fluorescens (strain SBW25).